The following is a 383-amino-acid chain: Cytochrome b (383 aa).

Transmembrane regions (helical) follow at residues 32–52 (VGSLLGLCLVMQMASGMFLAM), 76–98 (WLMRYIHANGASFFFMCLYLHMG), 113–133 (VWSMGVMMFMLTMATAFMGYC), and 179–199 (FFALHYLLPFILAALVVMHFM). Residues H82 and H96 each contribute to the heme b site. The heme b site is built by H183 and H197. H202 contributes to the a ubiquinone binding site. The next 4 helical transmembrane spans lie at 225 to 245 (FVFKDLMTVFVFILMFSLFVF), 289 to 309 (LGGVMAMFAALLMLLMLPMTD), 321 to 341 (LSKLSFYLFLFNFFLLMNMGQ), and 348 to 368 (FIELGQFATVYYFSYFLMLVP).

The protein belongs to the cytochrome b family. Fungal cytochrome b-c1 complex contains 10 subunits; 3 respiratory subunits, 2 core proteins and 5 low-molecular weight proteins. Cytochrome b-c1 complex is a homodimer. Heme b serves as cofactor.

Its subcellular location is the mitochondrion inner membrane. In terms of biological role, component of the ubiquinol-cytochrome c reductase complex (complex III or cytochrome b-c1 complex) that is part of the mitochondrial respiratory chain. The b-c1 complex mediates electron transfer from ubiquinol to cytochrome c. Contributes to the generation of a proton gradient across the mitochondrial membrane that is then used for ATP synthesis. This Debaryomyces hansenii (strain ATCC 36239 / CBS 767 / BCRC 21394 / JCM 1990 / NBRC 0083 / IGC 2968) (Yeast) protein is Cytochrome b (COB).